Reading from the N-terminus, the 218-residue chain is 4-coumaroyl-homoserine lactone synthase (218 aa).

This sequence belongs to the autoinducer synthase family.

It catalyses the reaction 4-coumaroyl-CoA + S-adenosyl-L-methionine = N-(4-coumaroyl)-L-homoserine lactone + S-methyl-5'-thioadenosine + CoA + H(+). Its function is as follows. Catalyzes the synthesis of 4-coumaroyl-homoserine lactone, a quorum-sensing (QS) autoinducer molecule which binds to RpaR transcriptional regulator to regulate expression of QS-dependent genes. The chain is 4-coumaroyl-homoserine lactone synthase from Rhodopseudomonas palustris (strain ATCC BAA-98 / CGA009).